The sequence spans 334 residues: Transcription initiation factor IIB (334 aa).

The segment at T34–D65 adopts a TFIIB-type zinc-finger fold. The Zn(2+) site is built by C38, C41, C57, and C60. A run of 2 repeats spans residues S151–L234 and D245–E326.

The protein belongs to the TFIIB family.

Its function is as follows. Stabilizes TBP binding to an archaeal box-A promoter. Also responsible for recruiting RNA polymerase II to the pre-initiation complex (DNA-TBP-TFIIB). The chain is Transcription initiation factor IIB from Methanoregula boonei (strain DSM 21154 / JCM 14090 / 6A8).